Consider the following 263-residue polypeptide: Thiazole synthase (263 aa).

The Schiff-base intermediate with DXP role is filled by Lys-102. 1-deoxy-D-xylulose 5-phosphate is bound by residues Gly-164, 190 to 191 (AG), and 212 to 213 (NT).

Belongs to the ThiG family. In terms of assembly, homotetramer. Forms heterodimers with either ThiH or ThiS.

The protein localises to the cytoplasm. The catalysed reaction is [ThiS sulfur-carrier protein]-C-terminal-Gly-aminoethanethioate + 2-iminoacetate + 1-deoxy-D-xylulose 5-phosphate = [ThiS sulfur-carrier protein]-C-terminal Gly-Gly + 2-[(2R,5Z)-2-carboxy-4-methylthiazol-5(2H)-ylidene]ethyl phosphate + 2 H2O + H(+). Its pathway is cofactor biosynthesis; thiamine diphosphate biosynthesis. In terms of biological role, catalyzes the rearrangement of 1-deoxy-D-xylulose 5-phosphate (DXP) to produce the thiazole phosphate moiety of thiamine. Sulfur is provided by the thiocarboxylate moiety of the carrier protein ThiS. In vitro, sulfur can be provided by H(2)S. The chain is Thiazole synthase from Helicobacter hepaticus (strain ATCC 51449 / 3B1).